Consider the following 60-residue polypeptide: UPF0181 protein PMI1604 (60 aa).

This sequence belongs to the UPF0181 family.

The protein is UPF0181 protein PMI1604 of Proteus mirabilis (strain HI4320).